A 132-amino-acid chain; its full sequence is Intraflagellar transport protein 20 homolog A (132 aa).

Positions 87-112 (EAQQQQLYALIAEKKMQLERYRIEYD) form a coiled coil.

It is found in the golgi apparatus. The protein localises to the cis-Golgi network. Its subcellular location is the cytoplasm. The protein resides in the cytoskeleton. It localises to the microtubule organizing center. It is found in the centrosome. The protein localises to the centriole. Its subcellular location is the cell projection. The protein resides in the cilium. Its function is as follows. Involved in ciliary process assembly. May play a role in the trafficking of ciliary membrane proteins from the Golgi complex to the cilium. Regulates the platelet-derived growth factor receptor-alpha (PDGFRA) signaling pathway. Plays an important role in spermatogenesis, particularly spermiogenesis, when germ cells form flagella. This is Intraflagellar transport protein 20 homolog A (ift20-a) from Xenopus laevis (African clawed frog).